A 278-amino-acid polypeptide reads, in one-letter code: Energy-coupling factor transporter ATP-binding protein EcfA1 (278 aa).

One can recognise an ABC transporter domain in the interval 5–239; it reads IRVQHLNYTY…GMELLRLGLD (235 aa). 39-46 contributes to the ATP binding site; it reads GHNGSGKS. E165 serves as the catalytic Proton acceptor.

The protein belongs to the ABC transporter superfamily. Energy-coupling factor EcfA family. As to quaternary structure, forms a stable energy-coupling factor (ECF) transporter complex probably composed of 2 membrane-embedded substrate-binding proteins (S component), 2 ATP-binding proteins (A component) and 2 transmembrane proteins (T component). This complex interacts with a number of substrate-specific components, including FolT and ThiT for 5-formyltetrahydrofolate and thiamine respectively.

Its subcellular location is the cell membrane. ATP-binding (A) component of a common energy-coupling factor (ECF) ABC-transporter complex. Unlike classic ABC transporters this ECF transporter provides the energy necessary to transport a number of different substrates including 5-formyltetrahydrofolate and thiamine. Expression of the complex plus FolT or ThiT in Lactococcus lactis subsp. cremoris (strain NZ9000) allows 5-formyltetrahydrofolate or thiamine uptake respectively; 5-formyltetrahydrofolate or thiamine are not taken up in the absence of FolT/ThiT or the EcfA1A2T complex. Deenergized L.lactis subsp. cremoris (treated with 2-deoxyglucose) does not take up substrate. In Lacticaseibacillus paracasei (strain ATCC 334 / BCRC 17002 / CCUG 31169 / CIP 107868 / KCTC 3260 / NRRL B-441) (Lactobacillus paracasei), this protein is Energy-coupling factor transporter ATP-binding protein EcfA1.